Consider the following 225-residue polypeptide: Endonuclease V (225 aa).

Positions 43 and 110 each coordinate Mg(2+).

This sequence belongs to the endonuclease V family. The cofactor is Mg(2+).

Its subcellular location is the cytoplasm. It catalyses the reaction Endonucleolytic cleavage at apurinic or apyrimidinic sites to products with a 5'-phosphate.. DNA repair enzyme involved in the repair of deaminated bases. Selectively cleaves double-stranded DNA at the second phosphodiester bond 3' to a deoxyinosine leaving behind the intact lesion on the nicked DNA. The chain is Endonuclease V from Thermotoga neapolitana (strain ATCC 49049 / DSM 4359 / NBRC 107923 / NS-E).